Consider the following 485-residue polypeptide: MSKVKESAIVSATSALQPQGPSSSYGLINSFAHQYDRGGANVNGKPSYTVDQAANYLLRDGAAWKDLNKDGTISLSYTFLTKAPSDFYSRGLGTFSQFSDLQKGQAKLAMQSWADVAKVTFTEAASGGDGHMTFGNFSASNGGAAFAYLPFDMPGSHKGESWYLINSSYQVNTTPGTGNYGRQTLTHEIGHVLGLSHPGDYNAGEGNPTYRDATYAQDTRGYSVMSYWSESNTGQNFVKAGGQYYASAPLMDDIAAIQKLYGANYATRSGDTVYGFNSNADRDFYSATSSSSKLVFSVWDGGGNDTFDFSGFTQNQKINLNETSFSDVGGMIGNVSIAKGVTIENAFGGSGNDLLIGNALANVLKGGAGNDIIYGGGGADQLWGGTGADTFVFGAISDSTKAAPDRIMDFTSGQDKIDLSAISAFAVNKLPLQFVNAFTGHAGEAVLSYDQGTNLGSLSIDFTGNSSADFLVTTVGQAAVTDIVV.

Position 187 (His187) interacts with Zn(2+). The active site involves Glu188. The Zn(2+) site is built by His191 and His197. 38 residues coordinate Ca(2+): Arg268, Gly270, Thr272, Asp300, Gly302, Gly303, Asp305, Thr342, Glu344, Gly349, Gly351, Asp353, Asn358, Leu360, Asn362, Gly366, Gly367, Ala368, Gly369, Asp371, Gly375, Gly376, Gly377, Gly378, Asp380, Gly384, Gly385, Thr386, Gly387, Asp389, Asp398, Asp405, Asp415, Asp461, Thr463, Asn465, Ser467, and Asp469. 3 Hemolysin-type calcium-binding repeats span residues 347 to 364 (FGGSGNDLLIGNALANVL), 365 to 382 (KGGAGNDIIYGGGGADQL), and 383 to 395 (WGGTGADTFVFGA).

Belongs to the peptidase M10B family. Ca(2+) serves as cofactor. Requires Zn(2+) as cofactor.

It is found in the secreted. In terms of biological role, secreted protease which is important for P.entomophila to counteract the local immune response of Drosophila. Can degrade antimicrobial peptides (AMPs), e.g. Diptericin and Cecropin A. Thus, protects P.entomophila from the Drosophila antimicrobial peptides produced by the gut innate immune response, and promotes bacterial persistence in the Drosophila gut and killing of the host. Is responsible for maturation of pro-Monalysin to the active toxin Monalysin, by cleaving its N-terminus. The chain is Metalloprotease AprA from Pseudomonas entomophila (strain L48).